We begin with the raw amino-acid sequence, 364 residues long: Protein RecA (364 aa).

An ATP-binding site is contributed by 77 to 84 (GPESSGKT). Residues 343-364 (DRFLQNGGPDPDDGDGDATAEM) are disordered. Positions 352–364 (DPDDGDGDATAEM) are enriched in acidic residues.

Belongs to the RecA family.

It localises to the cytoplasm. Functionally, can catalyze the hydrolysis of ATP in the presence of single-stranded DNA, the ATP-dependent uptake of single-stranded DNA by duplex DNA, and the ATP-dependent hybridization of homologous single-stranded DNAs. It interacts with LexA causing its activation and leading to its autocatalytic cleavage. The chain is Protein RecA from Rhizobium johnstonii (strain DSM 114642 / LMG 32736 / 3841) (Rhizobium leguminosarum bv. viciae).